Reading from the N-terminus, the 455-residue chain is Ectonucleoside triphosphate diphosphohydrolase 6 (455 aa).

The Cytoplasmic segment spans residues 1–12 (MRKIPNHGTLRM). The chain crosses the membrane as a helical; Signal-anchor for type II membrane protein span at residues 13–32 (TKVAYPLGLCVGLFIYVAYI). Over 33–455 (KWHRASAAQA…SLKRQKVPAL (423 aa)) the chain is Lumenal. N192 carries N-linked (GlcNAc...) asparagine glycosylation. The active-site Proton acceptor is E196. N-linked (GlcNAc...) asparagine glycosylation is present at N256. 2 disulfide bridges follow: C297–C327 and C387–C401.

Belongs to the GDA1/CD39 NTPase family. Ca(2+) is required as a cofactor. It depends on Mg(2+) as a cofactor. Might be cleaved at the N-terminus, retained in an intracellular membrane compartment and in addition be released into the extracellular medium. Post-translationally, N-glycosylated. In terms of tissue distribution, expressed in heart and brain.

It is found in the golgi apparatus membrane. The protein resides in the secreted. It localises to the cell membrane. It catalyses the reaction a ribonucleoside 5'-diphosphate + H2O = a ribonucleoside 5'-phosphate + phosphate + H(+). The catalysed reaction is IDP + H2O = IMP + phosphate + H(+). It carries out the reaction GDP + H2O = GMP + phosphate + H(+). The enzyme catalyses UDP + H2O = UMP + phosphate + H(+). Functionally, catalyzes the hydrolysis of nucleoside triphosphates and diphosphates in a calcium- or magnesium-dependent manner. Has a strong preference for nucleoside diphosphates, preferentially hydrolyzes GDP, IDP, and UDP, with slower hydrolysis of CDP, ITP, GTP, CTP, ADP, and UTP and virtually no hydrolysis of ATP. The membrane bound form might support glycosylation reactions in the Golgi apparatus and, when released from cells, might catalyze the hydrolysis of extracellular nucleotides. This is Ectonucleoside triphosphate diphosphohydrolase 6 (Entpd6) from Rattus norvegicus (Rat).